The primary structure comprises 65 residues: Large ribosomal subunit protein uL29 (65 aa).

The protein belongs to the universal ribosomal protein uL29 family.

This chain is Large ribosomal subunit protein uL29, found in Hyphomonas neptunium (strain ATCC 15444).